The following is a 318-amino-acid chain: Acetyl-coenzyme A carboxylase carboxyl transferase subunit alpha (318 aa).

The 255-residue stretch at 38 to 292 folds into the CoA carboxyltransferase C-terminal domain; the sequence is ALDRKAEEML…GEAIAAMLGE (255 aa).

It belongs to the AccA family. Acetyl-CoA carboxylase is a heterohexamer composed of biotin carboxyl carrier protein (AccB), biotin carboxylase (AccC) and two subunits each of ACCase subunit alpha (AccA) and ACCase subunit beta (AccD).

Its subcellular location is the cytoplasm. It catalyses the reaction N(6)-carboxybiotinyl-L-lysyl-[protein] + acetyl-CoA = N(6)-biotinyl-L-lysyl-[protein] + malonyl-CoA. It functions in the pathway lipid metabolism; malonyl-CoA biosynthesis; malonyl-CoA from acetyl-CoA: step 1/1. Component of the acetyl coenzyme A carboxylase (ACC) complex. First, biotin carboxylase catalyzes the carboxylation of biotin on its carrier protein (BCCP) and then the CO(2) group is transferred by the carboxyltransferase to acetyl-CoA to form malonyl-CoA. The sequence is that of Acetyl-coenzyme A carboxylase carboxyl transferase subunit alpha from Paracoccus denitrificans (strain Pd 1222).